The primary structure comprises 95 residues: Aspartyl/glutamyl-tRNA(Asn/Gln) amidotransferase subunit C (95 aa).

It belongs to the GatC family. As to quaternary structure, heterotrimer of A, B and C subunits.

The catalysed reaction is L-glutamyl-tRNA(Gln) + L-glutamine + ATP + H2O = L-glutaminyl-tRNA(Gln) + L-glutamate + ADP + phosphate + H(+). It carries out the reaction L-aspartyl-tRNA(Asn) + L-glutamine + ATP + H2O = L-asparaginyl-tRNA(Asn) + L-glutamate + ADP + phosphate + 2 H(+). Allows the formation of correctly charged Asn-tRNA(Asn) or Gln-tRNA(Gln) through the transamidation of misacylated Asp-tRNA(Asn) or Glu-tRNA(Gln) in organisms which lack either or both of asparaginyl-tRNA or glutaminyl-tRNA synthetases. The reaction takes place in the presence of glutamine and ATP through an activated phospho-Asp-tRNA(Asn) or phospho-Glu-tRNA(Gln). The sequence is that of Aspartyl/glutamyl-tRNA(Asn/Gln) amidotransferase subunit C from Rhodopseudomonas palustris (strain ATCC BAA-98 / CGA009).